Consider the following 217-residue polypeptide: Adenylate kinase (217 aa).

Gly-10 to Thr-15 contributes to the ATP binding site. Residues Ser-30–Val-59 form an NMP region. Residues Thr-31, Arg-36, Gly-57–Val-59, Gly-85–Arg-88, and Gln-92 contribute to the AMP site. An LID region spans residues Gly-122 to Asp-159. ATP contacts are provided by residues Arg-123 and Thr-132 to Tyr-133. AMP contacts are provided by Arg-156 and Arg-167. ATP is bound at residue Gly-203.

It belongs to the adenylate kinase family. As to quaternary structure, monomer.

The protein resides in the cytoplasm. The enzyme catalyses AMP + ATP = 2 ADP. It participates in purine metabolism; AMP biosynthesis via salvage pathway; AMP from ADP: step 1/1. Catalyzes the reversible transfer of the terminal phosphate group between ATP and AMP. Plays an important role in cellular energy homeostasis and in adenine nucleotide metabolism. This chain is Adenylate kinase, found in Dechloromonas aromatica (strain RCB).